Consider the following 385-residue polypeptide: 26S proteasome non-ATPase regulatory subunit 13 (385 aa).

Residues 176–347 (EFYKNALMYL…EIIHITWVTP (172 aa)) enclose the PCI domain.

The protein belongs to the proteasome subunit S11 family.

Functionally, acts as a regulatory subunit of the 26S proteasome which is involved in the ATP-dependent degradation of ubiquitinated proteins. This is 26S proteasome non-ATPase regulatory subunit 13 (psmD13) from Dictyostelium discoideum (Social amoeba).